Reading from the N-terminus, the 271-residue chain is Formamidopyrimidine-DNA glycosylase (271 aa).

The active-site Schiff-base intermediate with DNA is the P2. The active-site Proton donor is E3. Residue K58 is the Proton donor; for beta-elimination activity of the active site. H91, R110, and R152 together coordinate DNA. The FPG-type zinc-finger motif lies at 237-271; sequence RVYDRAGQPCRVCGEPIRCVRLGQRATYYCPRCQR. R261 (proton donor; for delta-elimination activity) is an active-site residue.

Belongs to the FPG family. Monomer. Zn(2+) serves as cofactor.

It catalyses the reaction Hydrolysis of DNA containing ring-opened 7-methylguanine residues, releasing 2,6-diamino-4-hydroxy-5-(N-methyl)formamidopyrimidine.. The enzyme catalyses 2'-deoxyribonucleotide-(2'-deoxyribose 5'-phosphate)-2'-deoxyribonucleotide-DNA = a 3'-end 2'-deoxyribonucleotide-(2,3-dehydro-2,3-deoxyribose 5'-phosphate)-DNA + a 5'-end 5'-phospho-2'-deoxyribonucleoside-DNA + H(+). In terms of biological role, involved in base excision repair of DNA damaged by oxidation or by mutagenic agents. Acts as a DNA glycosylase that recognizes and removes damaged bases. Has a preference for oxidized purines, such as 7,8-dihydro-8-oxoguanine (8-oxoG). Has AP (apurinic/apyrimidinic) lyase activity and introduces nicks in the DNA strand. Cleaves the DNA backbone by beta-delta elimination to generate a single-strand break at the site of the removed base with both 3'- and 5'-phosphates. The chain is Formamidopyrimidine-DNA glycosylase from Methylococcus capsulatus (strain ATCC 33009 / NCIMB 11132 / Bath).